We begin with the raw amino-acid sequence, 425 residues long: MAKQIQAIRGMNDILPTQSPLWQKVEAVLRSSVSAYGYSEIRTPIVENTDLFKRSIGEVTDIVEKEMYTFEDRNGDSLTLRPEGTASTVRAGNEHGLLYNQEQRLWYMGPMFRHERPQKGRYRQFHQFGVEVYGIGSADIDAEVLMLSARLWEKLGISEHVTLELNTLGDPAERAAYRDALIAFLEQHKDKLDEDSQRRMYSNPLRVLDSKDPQVQGILTDAPALMDYLGEESSQHFAQLRELLDAVGIQYRVNPRLVRGLDYYNRTVFEWVTNSLGSQGTVLAGGRYDGLVAQLGGKDTPAVGFAMGLERIVLLLETLGLTQDIPAAVDVYVTAMGENCLVEAIKVAQELRSALPHLKVMSHCGGGNVKKQMKRADKSGASVALLIGEEELAEGMVTVKHLRNDNEQQQVARNALSAFLAELTK.

The protein belongs to the class-II aminoacyl-tRNA synthetase family. In terms of assembly, homodimer.

The protein resides in the cytoplasm. It carries out the reaction tRNA(His) + L-histidine + ATP = L-histidyl-tRNA(His) + AMP + diphosphate + H(+). This Shewanella sp. (strain W3-18-1) protein is Histidine--tRNA ligase.